Reading from the N-terminus, the 340-residue chain is ATPase BagA (340 aa).

ATP is bound by residues Gly-31, Gly-33, Lys-34, Ser-35, Thr-36, Asn-240, Pro-316, and Val-318.

This sequence belongs to the arsA ATPase family. BagA/BagB subfamily. As to quaternary structure, forms a heterodimer composed of BagA and BagB. Interacts with Rv1509. Also interacts with a large number of proteins, including proteins required for mycolic acid biosynthesis.

Its activity is regulated as follows. The ATPase activity of the BagAB complex is not stimulated by antimonite, an arsenite substitute, suggesting that BagAB is not a transporter for this family of elements. Functionally, component of the heterodimeric BagAB ATPase complex, whose two subunits are actively involved in ATP hydrolysis. The ATPase activity is required to mediate resistance against nitric oxide (NO) and elevated levels of glycerol. This is ATPase BagA from Mycobacterium tuberculosis (strain ATCC 25618 / H37Rv).